The chain runs to 219 residues: Ribose-5-phosphate isomerase A (219 aa).

Substrate contacts are provided by residues Thr-28–Thr-31, Asp-81–Asp-84, and Lys-94–Gly-97. Glu-103 serves as the catalytic Proton acceptor. A substrate-binding site is contributed by Lys-121.

It belongs to the ribose 5-phosphate isomerase family. As to quaternary structure, homodimer.

It catalyses the reaction aldehydo-D-ribose 5-phosphate = D-ribulose 5-phosphate. Its pathway is carbohydrate degradation; pentose phosphate pathway; D-ribose 5-phosphate from D-ribulose 5-phosphate (non-oxidative stage): step 1/1. Functionally, catalyzes the reversible conversion of ribose-5-phosphate to ribulose 5-phosphate. The sequence is that of Ribose-5-phosphate isomerase A from Buchnera aphidicola subsp. Schizaphis graminum (strain Sg).